The chain runs to 339 residues: DNA-directed RNA polymerase subunit alpha (339 aa).

Positions 1–235 are alpha N-terminal domain (alpha-NTD); sequence MTIQKNWQEL…DQLNVFVNFE (235 aa). The segment at 251–339 is alpha C-terminal domain (alpha-CTD); sequence FNPAFLKKVD…ELAKRFEDHY (89 aa).

Belongs to the RNA polymerase alpha chain family. In terms of assembly, homodimer. The RNAP catalytic core consists of 2 alpha, 1 beta, 1 beta' and 1 omega subunit. When a sigma factor is associated with the core the holoenzyme is formed, which can initiate transcription.

It catalyses the reaction RNA(n) + a ribonucleoside 5'-triphosphate = RNA(n+1) + diphosphate. DNA-dependent RNA polymerase catalyzes the transcription of DNA into RNA using the four ribonucleoside triphosphates as substrates. In Rhodopseudomonas palustris (strain BisB5), this protein is DNA-directed RNA polymerase subunit alpha.